A 119-amino-acid chain; its full sequence is DNA-binding protein inhibitor ID-3 (119 aa).

Residues 28 to 80 (RGKSPSTEEPLSLLDDMNHCYSRLRELVPGVPRGTQLSQVEILQRVIDYILDL) form the bHLH domain. An interaction with IFI204 region spans residues 35–87 (EEPLSLLDDMNHCYSRLRELVPGVPRGTQLSQVEILQRVIDYILDLQVVLAEP).

Homodimer, and heterodimer with other HLH proteins. Interacts with CLOCK and BMAL1. Interacts with COPS5 and COPS7A. Interacts with IFI204. Interacts with GATA4 and NKX2-5. Interacts with ANKRD2; both proteins cooperate in myoblast differentiation. In terms of processing, polyubiquitinated; which is favored by Ifi204 and leads to proteasomal degradation. As to expression, expressed by myoblasts (at protein level).

It is found in the nucleus. The protein resides in the cytoplasm. In terms of biological role, transcriptional regulator (lacking a basic DNA binding domain) which negatively regulates the basic helix-loop-helix (bHLH) transcription factors by forming heterodimers and inhibiting their DNA binding and transcriptional activity. Implicated in regulating a variety of cellular processes, including cellular growth, senescence, differentiation, apoptosis, angiogenesis, and neoplastic transformation. Involved in myogenesis by inhibiting skeletal muscle and cardiac myocyte differentiation and promoting muscle precursor cells proliferation. Inhibits the binding of E2A-containing protein complexes to muscle creatine kinase E-box enhancer. Regulates the circadian clock by repressing the transcriptional activator activity of the CLOCK-BMAL1 heterodimer. The chain is DNA-binding protein inhibitor ID-3 (Id3) from Mus musculus (Mouse).